The chain runs to 231 residues: Augmin complex subunit dgt2 (231 aa).

Positions 128-199 (QEADLSCDQK…VQTKAELLRG (72 aa)) form a coiled coil.

Component of the augmin complex composed of dgt2, dgt3, dgt4, dgt5, dgt6, msd1, msd5 and wac. The complex interacts directly or indirectly with microtubules and is required for centrosome-independent generation of spindle microtubules. dgt2 interacts directly with wac (via coiled coil). In terms of tissue distribution, in adult females, detected only in the abdomen with no expression in the head or thorax (at protein level).

The protein resides in the cytoplasm. It localises to the cytoskeleton. Its subcellular location is the spindle. It is found in the spindle pole. Its function is as follows. As part of the augmin complex, plays a role in centrosome-independent generation of spindle microtubules. The complex is required for mitotic spindle assembly through its involvement in localizing gamma-tubulin to spindle microtubules. dgt2 binds to microtubules in vitro. The polypeptide is Augmin complex subunit dgt2 (Drosophila melanogaster (Fruit fly)).